Consider the following 492-residue polypeptide: Glutamate--cysteine ligase A, chloroplastic (492 aa).

Cysteines 156 and 376 form a disulfide.

This sequence belongs to the carboxylate-amine ligase family. Glutamate--cysteine ligase type 2 subfamily. As to quaternary structure, homodimer or monomer when oxidized or reduced, respectively. In terms of processing, the Cys-156-Cys-376 disulfide bridge is known to modulate the enzyme activity according to the redox status. The oxidized form constitutes the active enzyme.

It localises to the plastid. It is found in the chloroplast. It catalyses the reaction L-cysteine + L-glutamate + ATP = gamma-L-glutamyl-L-cysteine + ADP + phosphate + H(+). The protein operates within sulfur metabolism; glutathione biosynthesis; glutathione from L-cysteine and L-glutamate: step 1/2. In Oryza sativa subsp. japonica (Rice), this protein is Glutamate--cysteine ligase A, chloroplastic (GSH1-1).